The following is a 287-amino-acid chain: 4,4'-diapophytoene synthase (287 aa).

(2E,6E)-farnesyl diphosphate contacts are provided by residues 18–21 (HSKS), Tyr-41, and Arg-45. Mg(2+)-binding residues include Asp-48 and Asp-52. Gln-165 is a binding site for (2E,6E)-farnesyl diphosphate. Residue Asn-168 participates in Mg(2+) binding. Arg-171 contributes to the (2E,6E)-farnesyl diphosphate binding site. Asp-172 provides a ligand contact to Mg(2+). Tyr-248 is a binding site for (2E,6E)-farnesyl diphosphate.

It belongs to the phytoene/squalene synthase family. CrtM subfamily. Mg(2+) is required as a cofactor.

It catalyses the reaction 2 (2E,6E)-farnesyl diphosphate = 15-cis-4,4'-diapophytoene + 2 diphosphate. The protein operates within carotenoid biosynthesis; staphyloxanthin biosynthesis; staphyloxanthin from farnesyl diphosphate: step 1/5. Functionally, involved in the biosynthesis of the yellow-orange carotenoid staphyloxanthin, which plays a role in the virulence via its protective function against oxidative stress. Catalyzes the head-to-head condensation of two molecules of farnesyl diphosphate (FPP) into the colorless C(30) carotenoid 4,4'-diapophytoene (dehydrosqualene). The chain is 4,4'-diapophytoene synthase from Staphylococcus aureus (strain NCTC 8325 / PS 47).